We begin with the raw amino-acid sequence, 230 residues long: Urease accessory protein UreG (230 aa).

The segment at 1-31 (MPPHFLSADSTGQPHRHADRPKRVRTPGEPL) is disordered. Over residues 14–25 (PHRHADRPKRVR) the composition is skewed to basic residues. 37 to 44 (GPVGSGKT) serves as a coordination point for GTP.

This sequence belongs to the SIMIBI class G3E GTPase family. UreG subfamily. Homodimer. UreD, UreF and UreG form a complex that acts as a GTP-hydrolysis-dependent molecular chaperone, activating the urease apoprotein by helping to assemble the nickel containing metallocenter of UreC. The UreE protein probably delivers the nickel.

It is found in the cytoplasm. Facilitates the functional incorporation of the urease nickel metallocenter. This process requires GTP hydrolysis, probably effectuated by UreG. In Mycobacterium sp. (strain JLS), this protein is Urease accessory protein UreG.